A 233-amino-acid polypeptide reads, in one-letter code: Large ribosomal subunit protein uL1 (233 aa).

This sequence belongs to the universal ribosomal protein uL1 family. In terms of assembly, part of the 50S ribosomal subunit.

Binds directly to 23S rRNA. The L1 stalk is quite mobile in the ribosome, and is involved in E site tRNA release. Its function is as follows. Protein L1 is also a translational repressor protein, it controls the translation of the L11 operon by binding to its mRNA. This is Large ribosomal subunit protein uL1 from Vibrio parahaemolyticus serotype O3:K6 (strain RIMD 2210633).